The primary structure comprises 278 residues: Lectin 6 (278 aa).

Residues 1 to 23 form the signal peptide; that stretch reads MTLSSALIKIFITFLFLQNHVNS. N116, N139, and N271 each carry an N-linked (GlcNAc...) asparagine glycan.

It belongs to the leguminous lectin family.

May be involved in arbuscular mycorrhizal (AM) symbiosis with AM fungi. The protein is Lectin 6 of Medicago truncatula (Barrel medic).